The following is a 505-amino-acid chain: uncharacterized protein (505 aa).

An N-terminal signal peptide occupies residues 1–19 (MILFTAIILVASVVHVVVS). At 20–483 (SPQQCYYCVE…EQPNSAPRGE (464 aa)) the chain is on the extracellular side. Residues 484–504 (IHQLFRCTFVAVFIVFACFIV) form a helical membrane-spanning segment. A topological domain (cytoplasmic) is located at residue Cys505.

As to expression, component of the acid-insoluble and acid-soluble organic matrix of the aragonitic skeleton (at protein level).

It localises to the membrane. This is an uncharacterized protein from Acropora millepora (Staghorn coral).